The primary structure comprises 267 residues: Cell cycle checkpoint protein RAD1 homolog mrt-2 (267 aa).

This sequence belongs to the Rad1 family. As to quaternary structure, probable component of the toroidal 9-1-1 (RAD9-RAD1-HUS1) complex, composed of hpr-9, mrt-2 and hus-1. Interacts with hus-1. Might associate with hpr-9.

Its subcellular location is the nucleus. It catalyses the reaction Exonucleolytic cleavage in the 3'- to 5'-direction to yield nucleoside 5'-phosphates.. Functionally, may be a component of the 9-1-1 cell-cycle checkpoint response complex that plays a major role in DNA repair. Promotes DNA double strand break-induced cell cycle arrest and apoptosis, thereby playing a role in genome stability. Also required for telomere length maintenance and germline immortality. May possess 3'-&gt;5' double stranded DNA exonuclease activity. The polypeptide is Cell cycle checkpoint protein RAD1 homolog mrt-2 (Caenorhabditis elegans).